Consider the following 88-residue polypeptide: ATP synthase F(0) complex subunit f, mitochondrial (88 aa).

A2 is modified (N-acetylalanine). S3 carries the post-translational modification Phosphoserine. The residue at position 16 (K16) is an N6-acetyllysine. The chain crosses the membrane as a helical span at residues M62–L79.

It belongs to the ATPase F chain family. As to quaternary structure, component of the ATP synthase complex composed at least of ATP5F1A/subunit alpha, ATP5F1B/subunit beta, ATP5MC1/subunit c (homooctomer), MT-ATP6/subunit a, MT-ATP8/subunit 8, ATP5ME/subunit e, ATP5MF/subunit f, ATP5MG/subunit g, ATP5MK/subunit k, ATP5MJ/subunit j, ATP5F1C/subunit gamma, ATP5F1D/subunit delta, ATP5F1E/subunit epsilon, ATP5PF/subunit F6, ATP5PB/subunit b, ATP5PD/subunit d, ATP5PO/subunit OSCP. ATP synthase complex consists of a soluble F(1) head domain (subunits alpha(3) and beta(3)) - the catalytic core - and a membrane F(0) domain - the membrane proton channel (subunits c, a, 8, e, f, g, k and j). These two domains are linked by a central stalk (subunits gamma, delta, and epsilon) rotating inside the F1 region and a stationary peripheral stalk (subunits F6, b, d, and OSCP).

The protein resides in the mitochondrion. The protein localises to the mitochondrion inner membrane. In terms of biological role, subunit f, of the mitochondrial membrane ATP synthase complex (F(1)F(0) ATP synthase or Complex V) that produces ATP from ADP in the presence of a proton gradient across the membrane which is generated by electron transport complexes of the respiratory chain. ATP synthase complex consist of a soluble F(1) head domain - the catalytic core - and a membrane F(1) domain - the membrane proton channel. These two domains are linked by a central stalk rotating inside the F(1) region and a stationary peripheral stalk. During catalysis, ATP synthesis in the catalytic domain of F(1) is coupled via a rotary mechanism of the central stalk subunits to proton translocation. In vivo, can only synthesize ATP although its ATP hydrolase activity can be activated artificially in vitro. Part of the complex F(0) domain. The protein is ATP synthase F(0) complex subunit f, mitochondrial of Mus musculus (Mouse).